A 491-amino-acid polypeptide reads, in one-letter code: Probable glycine dehydrogenase (decarboxylating) subunit 2 (491 aa).

N6-(pyridoxal phosphate)lysine is present on Lys273.

It belongs to the GcvP family. C-terminal subunit subfamily. The glycine cleavage system is composed of four proteins: P, T, L and H. In this organism, the P 'protein' is a heterodimer of two subunits. The cofactor is pyridoxal 5'-phosphate.

It catalyses the reaction N(6)-[(R)-lipoyl]-L-lysyl-[glycine-cleavage complex H protein] + glycine + H(+) = N(6)-[(R)-S(8)-aminomethyldihydrolipoyl]-L-lysyl-[glycine-cleavage complex H protein] + CO2. Functionally, the glycine cleavage system catalyzes the degradation of glycine. The P protein binds the alpha-amino group of glycine through its pyridoxal phosphate cofactor; CO(2) is released and the remaining methylamine moiety is then transferred to the lipoamide cofactor of the H protein. In Bacillus cereus (strain B4264), this protein is Probable glycine dehydrogenase (decarboxylating) subunit 2.